The chain runs to 130 residues: Large ribosomal subunit protein bL12 (130 aa).

It belongs to the bacterial ribosomal protein bL12 family. Homodimer. Part of the ribosomal stalk of the 50S ribosomal subunit. Forms a multimeric L10(L12)X complex, where L10 forms an elongated spine to which 2 to 4 L12 dimers bind in a sequential fashion. Binds GTP-bound translation factors.

Forms part of the ribosomal stalk which helps the ribosome interact with GTP-bound translation factors. Is thus essential for accurate translation. In Mycolicibacterium vanbaalenii (strain DSM 7251 / JCM 13017 / BCRC 16820 / KCTC 9966 / NRRL B-24157 / PYR-1) (Mycobacterium vanbaalenii), this protein is Large ribosomal subunit protein bL12.